A 272-amino-acid polypeptide reads, in one-letter code: Putative phosphoenolpyruvate synthase regulatory protein (272 aa).

An ADP-binding site is contributed by 152–159; the sequence is GVSRSGKT.

Belongs to the pyruvate, phosphate/water dikinase regulatory protein family. PSRP subfamily.

The catalysed reaction is [pyruvate, water dikinase] + ADP = [pyruvate, water dikinase]-phosphate + AMP + H(+). The enzyme catalyses [pyruvate, water dikinase]-phosphate + phosphate + H(+) = [pyruvate, water dikinase] + diphosphate. In terms of biological role, bifunctional serine/threonine kinase and phosphorylase involved in the regulation of the phosphoenolpyruvate synthase (PEPS) by catalyzing its phosphorylation/dephosphorylation. The sequence is that of Putative phosphoenolpyruvate synthase regulatory protein from Methylibium petroleiphilum (strain ATCC BAA-1232 / LMG 22953 / PM1).